A 1327-amino-acid polypeptide reads, in one-letter code: Polarized growth protein L1 (1327 aa).

A signal peptide spans 1-30; sequence MRESFASLLATGAGKLALSLLFAATPFTSA. The Extracellular segment spans residues 31–1169; that stretch reads YTFNQVPSPN…FSQQNGKHLA (1139 aa). Asparagine 74, asparagine 90, asparagine 105, asparagine 115, asparagine 132, asparagine 170, asparagine 217, asparagine 224, asparagine 235, asparagine 318, asparagine 342, asparagine 452, asparagine 475, asparagine 601, asparagine 639, asparagine 648, and asparagine 691 each carry an N-linked (GlcNAc...) asparagine glycan. The stretch at 595-641 is one Kelch 1 repeat; it reads NLYVAGNFSNNDGRNNIFSFKQGASDPTALPNRGLNRQVMTLYQNDS. The stretch at 699–754 is one Kelch 2 repeat; the sequence is QVLAVSGFFDSVNEFNGNPSTNVQDFAVWVPSRSNWLHNLDFFTLAMSGRLMTFAD. Residues asparagine 835, asparagine 852, asparagine 877, and asparagine 931 are each glycosylated (N-linked (GlcNAc...) asparagine). Kelch repeat units follow at residues 945 to 993 and 994 to 1040; these read DVFV…ISDT and QMYI…TIAN. Asparagine 1000, asparagine 1006, and asparagine 1126 each carry an N-linked (GlcNAc...) asparagine glycan. A helical transmembrane segment spans residues 1170–1190; the sequence is LWAIVLIGLAIALVLTFLLVV. Residues 1191 to 1327 lie on the Cytoplasmic side of the membrane; the sequence is AGILLEWYRN…VFDTILACSS (137 aa).

The protein belongs to the RAX2 family.

Its subcellular location is the cell membrane. In terms of biological role, has been identified within the cluster that mediates the biosynthesis of squalestatin, but as its expression does not follow that of the other cluster members and it is not conserved in close related clusters, L1 seems not to be involved in the biosynthesis of squalestatin. Probably plays a role as a cell polarity regulator. The sequence is that of Polarized growth protein L1 from Phoma sp. (strain ATCC 20986 / MF5453).